A 385-amino-acid polypeptide reads, in one-letter code: Cytochrome b (385 aa).

The next 4 helical transmembrane spans lie at 32–52, 76–98, 113–133, and 179–199; these read FGSL…TLAM, WLVR…LHIG, TWAI…LGYV, and FFAL…MHLI. Residues His82 and His96 each contribute to the heme b site. Heme b contacts are provided by His183 and His197. An a ubiquinone-binding site is contributed by His202. Transmembrane regions (helical) follow at residues 226–246, 290–310, 322–342, and 349–369; these read FIFK…IFVF, LLGV…PITD, LSKV…QIGA, and FIEL…VIVP.

It belongs to the cytochrome b family. In terms of assembly, fungal cytochrome b-c1 complex contains 10 subunits; 3 respiratory subunits, 2 core proteins and 5 low-molecular weight proteins. Cytochrome b-c1 complex is a homodimer. The cofactor is heme b.

The protein resides in the mitochondrion inner membrane. Component of the ubiquinol-cytochrome c reductase complex (complex III or cytochrome b-c1 complex) that is part of the mitochondrial respiratory chain. The b-c1 complex mediates electron transfer from ubiquinol to cytochrome c. Contributes to the generation of a proton gradient across the mitochondrial membrane that is then used for ATP synthesis. The polypeptide is Cytochrome b (cob) (Aspergillus tubingensis).